The sequence spans 220 residues: Recombination protein RecR (220 aa).

A C4-type zinc finger spans residues 57 to 72; sequence CPICFNITDAEKCDVC. The 94-residue stretch at 80–173 folds into the Toprim domain; that stretch reads RTICVVEEPG…AISRIAYGVP (94 aa). A disordered region spans residues 190 to 220; the sequence is LTGRQTVSKPQPPQRPGDEDGADGAAVPASR.

It belongs to the RecR family.

Its function is as follows. May play a role in DNA repair. It seems to be involved in an RecBC-independent recombinational process of DNA repair. It may act with RecF and RecO. This chain is Recombination protein RecR, found in Deinococcus radiodurans (strain ATCC 13939 / DSM 20539 / JCM 16871 / CCUG 27074 / LMG 4051 / NBRC 15346 / NCIMB 9279 / VKM B-1422 / R1).